Here is a 158-residue protein sequence, read N- to C-terminus: MAESINSLEELGTVAKTEAAAPVHVQKLDAQGRAYATGKRKDAVARVWVKPGTGKITVNDKEFEKYFARPVLQMILQQPIVASNRAGQFDIVATVAGGGLSGQAGAVRHGISKALTDYEPGLRTVLKKGGFLTRDSRVVERKKYGKAKARRSFQFSKR.

This sequence belongs to the universal ribosomal protein uS9 family.

In Brucella abortus (strain S19), this protein is Small ribosomal subunit protein uS9.